Here is a 161-residue protein sequence, read N- to C-terminus: Cell division protein SepF (161 aa).

It belongs to the SepF family. In terms of assembly, homodimer. Interacts with FtsZ.

The protein resides in the cytoplasm. Functionally, cell division protein that is part of the divisome complex and is recruited early to the Z-ring. Probably stimulates Z-ring formation, perhaps through the cross-linking of FtsZ protofilaments. Its function overlaps with FtsA. In Finegoldia magna (strain ATCC 29328 / DSM 20472 / WAL 2508) (Peptostreptococcus magnus), this protein is Cell division protein SepF.